Reading from the N-terminus, the 396-residue chain is Elongation factor Tu (396 aa).

Positions 11 to 205 (KPHVNIGTIG…TVDEYVPTPE (195 aa)) constitute a tr-type G domain. The tract at residues 20–27 (GHVDHGKT) is G1. 20-27 (GHVDHGKT) contacts GTP. T27 contributes to the Mg(2+) binding site. The segment at 61-65 (GITIN) is G2. The tract at residues 82 to 85 (DAPG) is G3. Residues 82 to 86 (DAPGH) and 137 to 140 (NKTD) contribute to the GTP site. A G4 region spans residues 137-140 (NKTD). Residues 175 to 177 (SAL) are G5.

It belongs to the TRAFAC class translation factor GTPase superfamily. Classic translation factor GTPase family. EF-Tu/EF-1A subfamily. In terms of assembly, monomer.

The protein localises to the cytoplasm. It catalyses the reaction GTP + H2O = GDP + phosphate + H(+). In terms of biological role, GTP hydrolase that promotes the GTP-dependent binding of aminoacyl-tRNA to the A-site of ribosomes during protein biosynthesis. The sequence is that of Elongation factor Tu from Latilactobacillus sakei subsp. sakei (strain 23K) (Lactobacillus sakei subsp. sakei).